The chain runs to 674 residues: Ribosome biogenesis protein BOP1 homolog (674 aa).

The disordered stretch occupies residues 1 to 28 (MASTSAATPLKNKRKFENGKKKPKTLKD). Residues 15 to 28 (KFENGKKKPKTLKD) are compositionally biased toward basic and acidic residues. 7 WD repeats span residues 342–384 (GHTG…KTFQ), 386–425 (DGEVTSVSFSPVADRTLLAVAYEGKYVAILNTGCGDRLHV), 427–458 (QTEALLAETPTDAQEDGAVVTWRKSKEKLMLK), 459–500 (MPNE…SQCP), 503–541 (KRKGHVQAVTFHPTQARLFVATKIHVREYDLARCVLVKK), 587–626 (HHTAAVRSVAYHKKYPLLATVSDDGTAMVYYARIYTDFVK), and 643–674 (PNDLCMLHTTWHPTQPWLITAGADGTIALFTY).

Belongs to the WD repeat BOP1/ERB1 family.

The protein resides in the nucleus. It is found in the nucleolus. Its subcellular location is the nucleoplasm. Required for maturation of ribosomal RNAs and formation of the large ribosomal subunit. The protein is Ribosome biogenesis protein BOP1 homolog of Caenorhabditis elegans.